Reading from the N-terminus, the 513-residue chain is ATP synthase subunit alpha (513 aa).

An ATP-binding site is contributed by 169 to 176; it reads GDRQTGKT.

Belongs to the ATPase alpha/beta chains family. F-type ATPases have 2 components, CF(1) - the catalytic core - and CF(0) - the membrane proton channel. CF(1) has five subunits: alpha(3), beta(3), gamma(1), delta(1), epsilon(1). CF(0) has three main subunits: a(1), b(2) and c(9-12). The alpha and beta chains form an alternating ring which encloses part of the gamma chain. CF(1) is attached to CF(0) by a central stalk formed by the gamma and epsilon chains, while a peripheral stalk is formed by the delta and b chains.

The protein localises to the cell inner membrane. The catalysed reaction is ATP + H2O + 4 H(+)(in) = ADP + phosphate + 5 H(+)(out). Produces ATP from ADP in the presence of a proton gradient across the membrane. The alpha chain is a regulatory subunit. The chain is ATP synthase subunit alpha from Bordetella avium (strain 197N).